The chain runs to 605 residues: Endonuclease 8-like 3 (605 aa).

The Schiff-base intermediate with DNA; via amino nitrogen role is filled by Val-2. Asn-192 and Arg-271 together coordinate DNA. An FPG-type zinc finger spans residues 247–281 (KVYKRPNCGQCHCRITVCRFGDNNRMTYFCPHCQK). A RanBP2-type zinc finger spans residues 317–346 (SEEHWTCVVCTLINKPSSKACDACLTSRPI). A Phosphoserine modification is found at Ser-450. The segment at 456–477 (ESKLFSPAHKKPKTAQYSSPEL) is disordered. Zn(2+) contacts are provided by Cys-507, His-510, Cys-533, Cys-541, Cys-554, His-556, Cys-579, and Cys-587. GRF-type zinc fingers lie at residues 507–550 (CSKH…ADLS) and 554–596 (CNHG…AENG).

The protein belongs to the FPG family. In terms of tissue distribution, expressed in keratinocytes and embryonic fibroblasts (at protein level). Also detected in thymus, testis and fetal lung primary fibroblasts.

It is found in the nucleus. The protein resides in the chromosome. The catalysed reaction is 2'-deoxyribonucleotide-(2'-deoxyribose 5'-phosphate)-2'-deoxyribonucleotide-DNA = a 3'-end 2'-deoxyribonucleotide-(2,3-dehydro-2,3-deoxyribose 5'-phosphate)-DNA + a 5'-end 5'-phospho-2'-deoxyribonucleoside-DNA + H(+). DNA glycosylase which prefers single-stranded DNA (ssDNA), or partially ssDNA structures such as bubble and fork structures, to double-stranded DNA (dsDNA). Mediates interstrand cross-link repair in response to replication stress: acts by mediating DNA glycosylase activity, cleaving one of the two N-glycosyl bonds comprising the interstrand cross-link, which avoids the formation of a double-strand break but generates an abasic site that is bypassed by translesion synthesis polymerases. In vitro, displays strong glycosylase activity towards the hydantoin lesions spiroiminodihydantoin (Sp) and guanidinohydantoin (Gh) in both ssDNA and dsDNA; also recognizes FapyA, FapyG, 5-OHU, 5-OHC, 5-OHMH, Tg and 8-oxoA lesions in ssDNA. No activity on 8-oxoG detected. Also shows weak DNA-(apurinic or apyrimidinic site) lyase activity. In vivo, appears to be the primary enzyme involved in removing Sp and Gh from ssDNA in neonatal tissues. This is Endonuclease 8-like 3 (NEIL3) from Homo sapiens (Human).